A 494-amino-acid polypeptide reads, in one-letter code: Alpha-amylase B (494 aa).

Residues 1 to 18 (MFLAKSIVCLALLAVANA) form the signal peptide. Gln19 carries the pyrrolidone carboxylic acid modification. A disulfide bond links Cys46 and Cys102. Residues Asn116, Arg165, and Asp174 each coordinate Ca(2+). An intrachain disulfide couples Cys153 to Cys167. Arg202 lines the chloride pocket. Asp204 (nucleophile) is an active-site residue. His208 is a binding site for Ca(2+). Catalysis depends on Glu241, which acts as the Proton donor. Chloride contacts are provided by Asn304 and Arg343. Cystine bridges form between Cys376/Cys382 and Cys448/Cys460.

The protein belongs to the glycosyl hydrolase 13 family. As to quaternary structure, monomer. Ca(2+) serves as cofactor. Chloride is required as a cofactor.

It catalyses the reaction Endohydrolysis of (1-&gt;4)-alpha-D-glucosidic linkages in polysaccharides containing three or more (1-&gt;4)-alpha-linked D-glucose units.. This chain is Alpha-amylase B (Amy-d), found in Drosophila yakuba (Fruit fly).